The primary structure comprises 78 residues: HssA/B-like protein 29 (78 aa).

The tract at residues 1–31 (MTLFSSITSISKTNTSSKSSLNSFSGSSLSM) is disordered.

The protein belongs to the hssA/B family.

The sequence is that of HssA/B-like protein 29 (hssl29) from Dictyostelium discoideum (Social amoeba).